The primary structure comprises 150 residues: 3-dehydroquinate dehydratase (150 aa).

Tyrosine 23 serves as the catalytic Proton acceptor. 3 residues coordinate substrate: asparagine 75, histidine 81, and aspartate 88. Residue histidine 101 is the Proton donor of the active site. Residues leucine 102–serine 103 and arginine 112 contribute to the substrate site.

The protein belongs to the type-II 3-dehydroquinase family. As to quaternary structure, homododecamer.

The enzyme catalyses 3-dehydroquinate = 3-dehydroshikimate + H2O. Its pathway is metabolic intermediate biosynthesis; chorismate biosynthesis; chorismate from D-erythrose 4-phosphate and phosphoenolpyruvate: step 3/7. Catalyzes a trans-dehydration via an enolate intermediate. In Pseudomonas savastanoi pv. phaseolicola (strain 1448A / Race 6) (Pseudomonas syringae pv. phaseolicola (strain 1448A / Race 6)), this protein is 3-dehydroquinate dehydratase.